We begin with the raw amino-acid sequence, 748 residues long: Formate acetyltransferase (748 aa).

In terms of domain architecture, PFL spans 5–618; the sequence is NNHTNAWQGF…KTGNTPDGRK (614 aa). The S-acetylcysteine intermediate role is filled by Cys412. Catalysis depends on Cys413, which acts as the Cysteine radical intermediate. Residues 625–748 form the Glycine radical domain; that stretch reads PGANPMHGRD…VISRTFHESM (124 aa). Glycine radical is present on Gly723.

This sequence belongs to the glycyl radical enzyme (GRE) family. PFL subfamily. Homodimer.

Its subcellular location is the cytoplasm. The enzyme catalyses formate + acetyl-CoA = pyruvate + CoA. Its pathway is fermentation; pyruvate fermentation; formate from pyruvate: step 1/1. In terms of biological role, catalyzes the conversion of pyruvate to formate and acetyl-CoA. The protein is Formate acetyltransferase (pflB) of Staphylococcus epidermidis (strain ATCC 12228 / FDA PCI 1200).